The chain runs to 265 residues: Undecaprenyl-diphosphatase (265 aa).

8 helical membrane-spanning segments follow: residues 7–27, 45–65, 86–106, 108–128, 145–165, 186–206, 214–234, and 245–265; these read VIVS…PISS, TKIL…YFFH, LHIL…YKKI, LLFN…FLLI, ISLL…YPGF, IEFS…YDFI, ILDL…SILC, and TSLI…YFIN.

It belongs to the UppP family.

Its subcellular location is the cell membrane. It carries out the reaction di-trans,octa-cis-undecaprenyl diphosphate + H2O = di-trans,octa-cis-undecaprenyl phosphate + phosphate + H(+). In terms of biological role, catalyzes the dephosphorylation of undecaprenyl diphosphate (UPP). Confers resistance to bacitracin. This Buchnera aphidicola subsp. Acyrthosiphon pisum (strain 5A) protein is Undecaprenyl-diphosphatase.